We begin with the raw amino-acid sequence, 318 residues long: Ribonuclease Z (318 aa).

Histidine 63, histidine 65, aspartate 67, histidine 68, histidine 142, aspartate 213, and histidine 273 together coordinate Zn(2+). Catalysis depends on aspartate 67, which acts as the Proton acceptor.

The protein belongs to the RNase Z family. As to quaternary structure, homodimer. Zn(2+) serves as cofactor.

It carries out the reaction Endonucleolytic cleavage of RNA, removing extra 3' nucleotides from tRNA precursor, generating 3' termini of tRNAs. A 3'-hydroxy group is left at the tRNA terminus and a 5'-phosphoryl group is left at the trailer molecule.. Functionally, zinc phosphodiesterase, which displays some tRNA 3'-processing endonuclease activity. Probably involved in tRNA maturation, by removing a 3'-trailer from precursor tRNA. The chain is Ribonuclease Z from Leuconostoc mesenteroides subsp. mesenteroides (strain ATCC 8293 / DSM 20343 / BCRC 11652 / CCM 1803 / JCM 6124 / NCDO 523 / NBRC 100496 / NCIMB 8023 / NCTC 12954 / NRRL B-1118 / 37Y).